Consider the following 358-residue polypeptide: G-protein coupled receptor 20 (358 aa).

The Extracellular portion of the chain corresponds to 1–48 (MPSVSPAGPSAGAVPNATAVTTVRTNASGLEVPLFHLFARLDEELHGT). Residues asparagine 16 and asparagine 26 are each glycosylated (N-linked (GlcNAc...) asparagine). A helical transmembrane segment spans residues 49–69 (FPGLWLALMAVHGAIFLAGLV). Residues 70–86 (LNGLALYVFCCRTRAKT) are Cytoplasmic-facing. A helical membrane pass occupies residues 87 to 107 (PSVIYTINLVVTDLLVGLSLP). Over 108-125 (TRFAVYYGARGCLRCAFP) the chain is Extracellular. Residues 126–146 (HVLGYFLNMHCSILFLTCICV) traverse the membrane as a helical segment. The Cytoplasmic portion of the chain corresponds to 147–168 (DRYLAIVRPEGSRRCRQPACAR). Residues 169-189 (AVCAFVWLAAGAVTLSVLGVT) traverse the membrane as a helical segment. The Extracellular portion of the chain corresponds to 190 to 196 (GSRPCCR). Residues 197-217 (VFALTVLEFLLPLLVISVFTG) form a helical membrane-spanning segment. The Cytoplasmic portion of the chain corresponds to 218–238 (RIMCALSRPGLLHQGRQRRVR). Residues 239-259 (AMQLLLTVLIIFLVCFTPFHA) traverse the membrane as a helical segment. The Extracellular segment spans residues 260–275 (RQVAVALWPDMPHHTS). A helical membrane pass occupies residues 276 to 296 (LVVYHVAVTLSSLNSCMDPIV). At 297–358 (YCFVTSGFQA…TQALANGPEA (62 aa)) the chain is on the cytoplasmic side. Residues 315 to 339 (HGEREPSSGDVVSMHRSSKGSGRHH) are disordered. A compositionally biased stretch (basic residues) spans 330–339 (RSSKGSGRHH).

This sequence belongs to the G-protein coupled receptor 1 family. Ubiquitous with highest levels in intestinal tissues. In the brain detected in thalamus, putamen, and caudate, but not in frontal cortex, pons and hypothalamus.

It localises to the cell membrane. Functionally, orphan receptor with constitutive G(i) signaling activity that activate cyclic AMP. In Homo sapiens (Human), this protein is G-protein coupled receptor 20 (GPR20).